The chain runs to 427 residues: 3-isopropylmalate dehydratase large subunit (427 aa).

[4Fe-4S] cluster contacts are provided by Cys-308, Cys-368, and Cys-371.

Belongs to the aconitase/IPM isomerase family. LeuC type 2 subfamily. As to quaternary structure, heterodimer of LeuC and LeuD. The cofactor is [4Fe-4S] cluster.

It catalyses the reaction (2R,3S)-3-isopropylmalate = (2S)-2-isopropylmalate. Its pathway is amino-acid biosynthesis; L-leucine biosynthesis; L-leucine from 3-methyl-2-oxobutanoate: step 2/4. Catalyzes the isomerization between 2-isopropylmalate and 3-isopropylmalate, via the formation of 2-isopropylmaleate. The chain is 3-isopropylmalate dehydratase large subunit from Citrifermentans bemidjiense (strain ATCC BAA-1014 / DSM 16622 / JCM 12645 / Bem) (Geobacter bemidjiensis).